Here is a 555-residue protein sequence, read N- to C-terminus: F-box protein COS111 (555 aa).

Disordered regions lie at residues 31–82 (MSVS…SVSN) and 124–147 (DHSI…KQHH). Residues 32–42 (SVSSRSSQEES) show a composition bias toward low complexity. Over residues 48-61 (ESVSSLSMQEQQTE) the composition is skewed to polar residues. A compositionally biased stretch (low complexity) spans 129-142 (SGVTRSTVSTVRPT). The F-box domain occupies 196 to 246 (HKDLNSLPHEIMSKIVSHLDQRDVTMCLYVNKNMYSTAVRQLYKEPFFSST). Positions 327 to 346 (SSSSLSCSRTSSNSNSSTES) are enriched in low complexity. Positions 327–354 (SSSSLSCSRTSSNSNSSTESKPVKKRRS) are disordered.

Its function is as follows. F-box protein probably involved in ubiquitin conjugation pathway. The sequence is that of F-box protein COS111 (COS111) from Yarrowia lipolytica (strain CLIB 122 / E 150) (Yeast).